A 447-amino-acid chain; its full sequence is uncharacterized protein (447 aa).

It to E.coli plasmid IncP-alpha RP4 protein TraN.

This is an uncharacterized protein from Haemophilus influenzae (strain ATCC 51907 / DSM 11121 / KW20 / Rd).